The following is an 859-amino-acid chain: Leucine--tRNA ligase (859 aa).

The 'HIGH' region motif lies at Pro-42–His-52. The 'KMSKS' region motif lies at Lys-618–Ser-622. Lys-621 is an ATP binding site.

It belongs to the class-I aminoacyl-tRNA synthetase family.

It localises to the cytoplasm. It carries out the reaction tRNA(Leu) + L-leucine + ATP = L-leucyl-tRNA(Leu) + AMP + diphosphate. This Shewanella woodyi (strain ATCC 51908 / MS32) protein is Leucine--tRNA ligase.